We begin with the raw amino-acid sequence, 255 residues long: MLTKRIIACLDVKDGRVVKGTQFKNHKDMGDIIELARYYSQNGIDELVFYDIAASARKERISREWVSEVAKNINIPFCVAGGIKSEEDAAELLANGADKISINSPALNDPSLITRLAKSFGVQCVVVGIDSFKDENGNLKVFQYTGDEKTSKHSGKSTLEWVKEVQDLGAGEIVLNMMNQDGVKNGYDLEQLKAVYKICKVPLIASGGAGKMEHFLEAFKLGIDGALAASVFHQKLIDIKELKIYLKNQGLSIRI.

Catalysis depends on residues aspartate 11 and aspartate 130.

It belongs to the HisA/HisF family. As to quaternary structure, heterodimer of HisH and HisF.

It is found in the cytoplasm. The enzyme catalyses 5-[(5-phospho-1-deoxy-D-ribulos-1-ylimino)methylamino]-1-(5-phospho-beta-D-ribosyl)imidazole-4-carboxamide + L-glutamine = D-erythro-1-(imidazol-4-yl)glycerol 3-phosphate + 5-amino-1-(5-phospho-beta-D-ribosyl)imidazole-4-carboxamide + L-glutamate + H(+). It participates in amino-acid biosynthesis; L-histidine biosynthesis; L-histidine from 5-phospho-alpha-D-ribose 1-diphosphate: step 5/9. In terms of biological role, IGPS catalyzes the conversion of PRFAR and glutamine to IGP, AICAR and glutamate. The HisF subunit catalyzes the cyclization activity that produces IGP and AICAR from PRFAR using the ammonia provided by the HisH subunit. This Campylobacter jejuni subsp. jejuni serotype O:6 (strain 81116 / NCTC 11828) protein is Imidazole glycerol phosphate synthase subunit HisF.